A 177-amino-acid polypeptide reads, in one-letter code: UPF0114 protein HPAG1_0183 (177 aa).

The next 4 helical transmembrane spans lie at 15–35, 54–74, 102–122, and 145–165; these read WLLA…GYVF, LVLS…VLMV, FNAL…IFLL, and PIFW…LAAV.

Belongs to the UPF0114 family.

The protein resides in the cell membrane. The chain is UPF0114 protein HPAG1_0183 from Helicobacter pylori (strain HPAG1).